The chain runs to 302 residues: ATP synthase gamma chain (302 aa).

It belongs to the ATPase gamma chain family. In terms of assembly, F-type ATPases have 2 components, CF(1) - the catalytic core - and CF(0) - the membrane proton channel. CF(1) has five subunits: alpha(3), beta(3), gamma(1), delta(1), epsilon(1). CF(0) has three main subunits: a, b and c.

It is found in the cell membrane. Functionally, produces ATP from ADP in the presence of a proton gradient across the membrane. The gamma chain is believed to be important in regulating ATPase activity and the flow of protons through the CF(0) complex. The chain is ATP synthase gamma chain from Leuconostoc citreum (strain KM20).